A 60-amino-acid polypeptide reads, in one-letter code: Large ribosomal subunit protein uL30 (60 aa).

It belongs to the universal ribosomal protein uL30 family. As to quaternary structure, part of the 50S ribosomal subunit.

This chain is Large ribosomal subunit protein uL30, found in Bacillus anthracis (strain A0248).